Reading from the N-terminus, the 1348-residue chain is Vascular endothelial growth factor receptor 2 (1348 aa).

Residues 1 to 20 (MELGPLRVLTVLLCLAPVFA) form the signal peptide. Over 21–756 (GLFISMDQPT…GAEEKTNLEL (736 aa)) the chain is Extracellular. Residues N43, N47, N63, N93, N138, N153, N201, N240, N290, N310, N365, N386, N513, N556, N603, N613, N622, N666, N688, and N710 are each glycosylated (N-linked (GlcNAc...) asparagine). Ig-like C2-type domains are found at residues 43–106 (NDTL…GDSQ), 138–202 (NKTV…IDNE), 220–312 (DLTM…KNSS), 320–405 (PFIH…HTFT), 412–534 (PQIG…RVIS), 540–651 (GLEI…KHLT), and 658–744 (PRLV…AFFS). A disulfide bridge connects residues C50 and C100. The cysteines at positions 145 and 195 are disulfide-linked. C241 and C299 are disulfide-bonded. A disulfide bridge links C436 with C520. Cysteines 561 and 633 form a disulfide. C679 and C728 form a disulfide bridge. A helical membrane pass occupies residues 757–777 (IILVGTAVIAMFFWLLLVIIL). Residues 778 to 1348 (RTVKRANGGD…SPAPVASLPL (571 aa)) lie on the Cytoplasmic side of the membrane. In terms of domain architecture, Protein kinase spans 825 to 1155 (LKLGKPLGRG…FSELVEHLGN (331 aa)). Residues 831–839 (LGRGAFGQV) and K859 contribute to the ATP site. A compositionally biased stretch (low complexity) spans 958 to 967 (ITSSQSSTSS). The tract at residues 958–983 (ITSSQSSTSSGFVEERSLSDVEEEDA) is disordered. D1021 functions as the Proton acceptor in the catalytic mechanism. A phosphotyrosine; by autocatalysis mark is found at Y1047, Y1052, Y1168, and Y1207. Positions 1280 to 1302 (PSKSNESVMSEASNQTSGYQSGY) are disordered.

This sequence belongs to the protein kinase superfamily. Tyr protein kinase family. CSF-1/PDGF receptor subfamily. Autophosphorylated on tyrosine residues upon ligand binding. Autophosphorylation occurs in trans, i.e. one subunit of the dimeric receptor phosphorylates tyrosine residues on the other subunit. In all endothelial tissues during onset of vascularization. In later development, present in lung, heart, intestine and skin.

Its subcellular location is the cell membrane. The protein localises to the cytoplasmic vesicle. The protein resides in the early endosome. It localises to the cell junction. It is found in the endoplasmic reticulum. The catalysed reaction is L-tyrosyl-[protein] + ATP = O-phospho-L-tyrosyl-[protein] + ADP + H(+). With respect to regulation, present in an inactive conformation in the absence of bound ligand. Binding of VEGFA, VEGFC or VEGFD leads to dimerization and activation by autophosphorylation on tyrosine residues. Its function is as follows. Tyrosine-protein kinase that acts as a cell-surface receptor for VEGFA, VEGFC and/or VEGFD and plays an essential role in the regulation of angiogenesis and vascular development. Promotes proliferation, survival, migration and differentiation of endothelial cells. Promotes reorganization of the actin cytoskeleton. Binding of vascular growth factors leads to the activation of several signaling cascades. Activation of PLCG1 leads to the production of the cellular signaling molecules diacylglycerol and inositol 1,4,5-trisphosphate and the activation of protein kinase C. Mediates activation of MAPK1/ERK2, MAPK3/ERK1 and the MAP kinase signaling pathway, as well as of the AKT1 signaling pathway. Mediates phosphorylation of PIK3R1, the regulatory subunit of phosphatidylinositol 3-kinase, reorganization of the actin cytoskeleton and activation of PTK2/FAK1. Required for VEGFA-mediated induction of NOS2 and NOS3, leading to the production of the signaling molecule nitric oxide (NO) by endothelial cells. The protein is Vascular endothelial growth factor receptor 2 of Coturnix japonica (Japanese quail).